The following is a 280-amino-acid chain: Shikimate dehydrogenase (NADP(+)) (280 aa).

Residues 18 to 20 (SRS) and T65 contribute to the shikimate site. The active-site Proton acceptor is the K69. 2 residues coordinate shikimate: N90 and D105. NADP(+) is bound by residues 131 to 135 (GAGGA), 154 to 159 (NRTRAR), and I219. Y221 contributes to the shikimate binding site. G242 contributes to the NADP(+) binding site.

It belongs to the shikimate dehydrogenase family. As to quaternary structure, homodimer.

The enzyme catalyses shikimate + NADP(+) = 3-dehydroshikimate + NADPH + H(+). It functions in the pathway metabolic intermediate biosynthesis; chorismate biosynthesis; chorismate from D-erythrose 4-phosphate and phosphoenolpyruvate: step 4/7. Functionally, involved in the biosynthesis of the chorismate, which leads to the biosynthesis of aromatic amino acids. Catalyzes the reversible NADPH linked reduction of 3-dehydroshikimate (DHSA) to yield shikimate (SA). The chain is Shikimate dehydrogenase (NADP(+)) from Methylocella silvestris (strain DSM 15510 / CIP 108128 / LMG 27833 / NCIMB 13906 / BL2).